Here is an 897-residue protein sequence, read N- to C-terminus: Staphylococcal nuclease domain-containing protein 1 (897 aa).

TNase-like domains are found at residues 18 to 167 (QLQR…LWSE), 194 to 329 (KPVN…IWKD), 342 to 499 (RQFV…LHSK), and 528 to 663 (GRSE…LWAN). In terms of domain architecture, Tudor spans 732-790 (APRRGEFCIAKFADGEWYRARVEKVESPAKVHVFYIDYGNREVLSSTRLAALPPAFSTR).

Its subcellular location is the cytoplasm. This is Staphylococcal nuclease domain-containing protein 1 (snd1) from Danio rerio (Zebrafish).